A 212-amino-acid chain; its full sequence is Imidazole glycerol phosphate synthase subunit HisH (212 aa).

The Glutamine amidotransferase type-1 domain maps to 2–212 (LTAIIDYESG…MIGNFLTWTP (211 aa)). Cys-87 serves as the catalytic Nucleophile. Residues His-192 and Glu-194 contribute to the active site.

As to quaternary structure, heterodimer of HisH and HisF.

Its subcellular location is the cytoplasm. The enzyme catalyses 5-[(5-phospho-1-deoxy-D-ribulos-1-ylimino)methylamino]-1-(5-phospho-beta-D-ribosyl)imidazole-4-carboxamide + L-glutamine = D-erythro-1-(imidazol-4-yl)glycerol 3-phosphate + 5-amino-1-(5-phospho-beta-D-ribosyl)imidazole-4-carboxamide + L-glutamate + H(+). It catalyses the reaction L-glutamine + H2O = L-glutamate + NH4(+). It participates in amino-acid biosynthesis; L-histidine biosynthesis; L-histidine from 5-phospho-alpha-D-ribose 1-diphosphate: step 5/9. IGPS catalyzes the conversion of PRFAR and glutamine to IGP, AICAR and glutamate. The HisH subunit catalyzes the hydrolysis of glutamine to glutamate and ammonia as part of the synthesis of IGP and AICAR. The resulting ammonia molecule is channeled to the active site of HisF. This Ruegeria pomeroyi (strain ATCC 700808 / DSM 15171 / DSS-3) (Silicibacter pomeroyi) protein is Imidazole glycerol phosphate synthase subunit HisH.